A 560-amino-acid polypeptide reads, in one-letter code: Dimethylaniline monooxygenase [N-oxide-forming] 4 (560 aa).

Residues 9–13, E32, and 40–41 each bind FAD; these read GAGVS and LW. NADP(+) contacts are provided by residues 60-61 and 195-198; these read TN and TGGD. Residues 519–539 form a helical membrane-spanning segment; the sequence is APVLIVSLLLIYKSSLFLELV.

It belongs to the FMO family. FAD serves as cofactor. Detected in liver and kidney (at protein level).

The protein resides in the microsome membrane. It localises to the endoplasmic reticulum membrane. The catalysed reaction is N,N-dimethylaniline + NADPH + O2 + H(+) = N,N-dimethylaniline N-oxide + NADP(+) + H2O. In terms of biological role, this protein is involved in the oxidative metabolism of a variety of xenobiotics such as drugs and pesticides. The sequence is that of Dimethylaniline monooxygenase [N-oxide-forming] 4 (Fmo4) from Rattus norvegicus (Rat).